A 451-amino-acid polypeptide reads, in one-letter code: Tubulin gamma-1 chain (451 aa).

Residue Ser131 is modified to Phosphoserine; by BRSK1. 142–148 (AGGTGSG) is a binding site for GTP.

Belongs to the tubulin family. As to quaternary structure, component of the gamma-tubulin ring complex (gTuRC) consisting of TUBGCP2, TUBGCP3, TUBGCP4, TUBGCP5 and TUBGCP6 and gamma-tubulin TUBG1 or TUBG2. TUBGCP2, TUBGCP3, TUBGCP4, TUBGCP5 and TUBGCP6 assemble in a 5:5:2:1:1 stoichiometry; each is associated with a gamma-tubulin, thereby arranging 14 gamma-tubulins in a helical manner. Gamma-tubulin at the first position is blocked by TUBGCP3 at the last position, allowing 13 protafilaments to grow into a microtubule. The gTuRC (via TUBGCP3 and TUBGCP6) interacts with ACTB and MZT1; the interactions form a luminal bridge that stabilizes the initial structure during complex assembly. The gTuRC (via TUBGCP2) interacts with MZT2A/MZT2B and CDK5RAP2 (via CM1 motif); the interactions play a role in gTuRC activation. Interacts with alpha-beta tubulin heterodimers; the interaction allows microtubules to nucleate from the gTuRC. Interacts with B9D2. Interacts with CDK5RAP2; the interaction is leading to centrosomal localization of TUBG1 and CDK5RAP2. Interacts with CIMAP3. Interacts with SAS6 and NUP62 at the centrosome. Interacts with EML3 (phosphorylated at 'Thr-881') and HAUS8. Interacts with DNM2; this interaction may participate in centrosome cohesion. Interacts with CCDC66. In terms of processing, phosphorylation at Ser-131 by BRSK1 regulates centrosome duplication, possibly by mediating relocation of gamma-tubulin and its associated proteins from the cytoplasm to the centrosome.

The protein resides in the cytoplasm. The protein localises to the cytoskeleton. It is found in the microtubule organizing center. It localises to the centrosome. Its subcellular location is the spindle. In terms of biological role, tubulin is the major constituent of microtubules, protein filaments consisting of alpha- and beta-tubulin heterodimers. Gamma-tubulin is a key component of the gamma-tubulin ring complex (gTuRC) which mediates microtubule nucleation. The gTuRC regulates the minus-end nucleation of alpha-beta tubulin heterodimers that grow into microtubule protafilaments, a critical step in centrosome duplication and spindle formation. The sequence is that of Tubulin gamma-1 chain from Mus musculus (Mouse).